A 234-amino-acid chain; its full sequence is Ponticulin-like protein J (234 aa).

A signal peptide spans 1-20 (MRLLNNLILMVVLFVAVSNA). Residues Asn-19, Asn-143, Asn-166, and Asn-206 are each glycosylated (N-linked (GlcNAc...) asparagine). A disordered region spans residues 115-213 (TIKCGTLPPD…SDNETAEGNN (99 aa)). Over residues 154-195 (KSTPKSPSTPKTNNSNEDSDLTTSSSDSSSSTKSSPKSKSST) the composition is skewed to low complexity. Asn-212 carries GPI-like-anchor amidated asparagine lipidation. Asn-213 carries an N-linked (GlcNAc...) asparagine glycan. A propeptide spans 213–234 (NASSNIATFSLVIISLLVASLF) (removed in mature form).

It belongs to the ponticulin family. In terms of processing, the GPI-like-anchor contains a phosphoceramide group, rather than a phosphatidyl group.

The protein resides in the cell membrane. Its function is as follows. Binds F-actin and nucleates actin assembly. This is Ponticulin-like protein J (ponJ) from Dictyostelium discoideum (Social amoeba).